We begin with the raw amino-acid sequence, 97 residues long: Single insulin-like growth factor-binding domain protein-1 (97 aa).

Positions 1 to 19 (MKTLFVFAVGIMLSMRASA) are cleaved as a signal peptide. Residues 20-96 (FTCPECRPEL…PEIVGTCVKI (77 aa)) enclose the IGFBP N-terminal domain. Thr-21 carries an O-linked (GalNAc...) threonine glycan. Intrachain disulfides connect Cys-22–Cys-45, Cys-25–Cys-47, Cys-30–Cys-48, Cys-36–Cys-51, Cys-59–Cys-75, and Cys-69–Cys-93.

As to expression, expressed in hemocytes.

Its subcellular location is the secreted. Functionally, has a role in the innate immune system. The chain is Single insulin-like growth factor-binding domain protein-1 from Cupiennius salei (American wandering spider).